A 429-amino-acid chain; its full sequence is Violacein synthase (429 aa).

Position 3 to 21 (3 to 21) interacts with FAD; sequence RAIIVGGGLAGGLTAIYLA.

Requires FAD as cofactor.

It catalyses the reaction protoviolaceinate + NADPH + O2 + H(+) = violaceinate + NADP(+) + H2O. The catalysed reaction is protoviolaceinate + NADH + O2 + H(+) = violaceinate + NAD(+) + H2O. The enzyme catalyses protodeoxyviolaceinate + NADPH + O2 + H(+) = deoxyviolaceinate + NADP(+) + H2O. It carries out the reaction protodeoxyviolaceinate + NADH + O2 + H(+) = deoxyviolaceinate + NAD(+) + H2O. The protein operates within pigment biosynthesis; violacein biosynthesis. Catalyzes the hydroxylation of the 16-position of protoviolaceinate and protodeoxyviolaceinate to form violacein and deoxyviolacein, respectively. The chain is Violacein synthase (vioC) from Chromobacterium violaceum (strain ATCC 12472 / DSM 30191 / JCM 1249 / CCUG 213 / NBRC 12614 / NCIMB 9131 / NCTC 9757 / MK).